Here is a 330-residue protein sequence, read N- to C-terminus: D-lactate dehydrogenase (330 aa).

NAD(+) contacts are provided by residues 155 to 156 (RI), aspartate 175, 206 to 207 (MP), asparagine 212, 233 to 235 (MAR), and aspartate 259. Arginine 235 is a catalytic residue. The active site involves glutamate 264. The Proton donor role is filled by histidine 296.

This sequence belongs to the D-isomer specific 2-hydroxyacid dehydrogenase family.

It carries out the reaction (R)-lactate + NAD(+) = pyruvate + NADH + H(+). This is D-lactate dehydrogenase (ldhD) from Streptococcus agalactiae serotype III (strain NEM316).